A 1045-amino-acid chain; its full sequence is FERM, ARHGEF and pleckstrin domain-containing protein 1 (1045 aa).

Residues methionine 1–glycine 37 are disordered. Residues serine 20 and serine 23 each carry the phosphoserine modification. Threonine 24 is subject to Phosphothreonine. The 281-residue stretch at valine 40–glutamate 320 folds into the FERM domain. Phosphoserine is present on residues serine 340, serine 373, serine 389, serine 403, serine 418, serine 427, and serine 433. Residues phenylalanine 361–lysine 534 form a disordered region. Positions serine 373–threonine 396 are enriched in polar residues. 2 stretches are compositionally biased toward polar residues: residues threonine 471–glycine 489 and valine 496–proline 511. Phosphoserine occurs at positions 510 and 514. Residues lysine 540–threonine 730 enclose the DH domain. The 98-residue stretch at glutamate 759–aspartate 856 folds into the PH 1 domain. A phosphoserine mark is found at serine 833, serine 872, and serine 878. A disordered region spans residues proline 864–glutamine 903. Threonine 883 is modified (phosphothreonine). A phosphoserine mark is found at serine 889, serine 896, and serine 899. In terms of domain architecture, PH 2 spans glutamate 932–serine 1029.

Interacts with CADM1. Interacts with RAC1. Detected in cAMP-treated chondrocytes, but not in untreated chondrocytes. Detected in fetal brain, heart and spleen, and in adult testis, kidney and lung.

The protein localises to the cell membrane. It is found in the synapse. Its subcellular location is the synaptosome. It localises to the cytoplasm. The protein resides in the cytosol. The protein localises to the cell projection. It is found in the filopodium. Its subcellular location is the dendrite. It localises to the dendritic spine. Functions as a guanine nucleotide exchange factor for RAC1. May play a role in semaphorin signaling. Plays a role in the assembly and disassembly of dendritic filopodia, the formation of dendritic spines, regulation of dendrite length and ultimately the formation of synapses. This chain is FERM, ARHGEF and pleckstrin domain-containing protein 1 (FARP1), found in Homo sapiens (Human).